Consider the following 110-residue polypeptide: Iron-sulfur cluster assembly protein CyaY (110 aa).

This sequence belongs to the frataxin family.

Its function is as follows. Involved in iron-sulfur (Fe-S) cluster assembly. May act as a regulator of Fe-S biogenesis. The chain is Iron-sulfur cluster assembly protein CyaY from Pseudomonas putida (strain ATCC 700007 / DSM 6899 / JCM 31910 / BCRC 17059 / LMG 24140 / F1).